Consider the following 418-residue polypeptide: Staphyloferrin B transporter (418 aa).

10 helical membrane-spanning segments follow: residues 19-39 (FIAI…MASL), 49-69 (LWSG…SPIW), 88-108 (GLAV…FVLV), 163-183 (ILGF…VCIF), 222-242 (FIIV…ALSP), 257-277 (VIGF…PLWG), 287-307 (SVYI…GLAT), 317-337 (ILQG…VVNA), 353-373 (MLVV…SYTT), and 377-397 (TFIV…CSTI).

The protein belongs to the major facilitator superfamily.

The protein localises to the cell membrane. In terms of biological role, involved in staphyloferrin B secretion. In Staphylococcus aureus (strain NCTC 8325 / PS 47), this protein is Staphyloferrin B transporter.